A 730-amino-acid polypeptide reads, in one-letter code: Kinesin-like protein KIF2C (730 aa).

Residues 1–256 (MERLVATRLV…MDCHRISMAD (256 aa)) form a globular region. A disordered region spans residues 79–98 (NMPPQRNVSSQNHKRKTISK). The interval 211–242 (EQRAQNYERRMKRAQDYDTSVPNWEFGKMIKE) is negative regulator of microtubule-binding. The 331-residue stretch at 262–592 (RICVCVRKRP…LRYADRVKEL (331 aa)) folds into the Kinesin motor domain. ATP-binding positions include Arg268 and 352–359 (GQTGSGKT). The stretch at 599-730 (TNDDNLQMED…QISKKKRSNK (132 aa)) forms a coiled coil.

Belongs to the TRAFAC class myosin-kinesin ATPase superfamily. Kinesin family. MCAK/KIF2 subfamily.

Its subcellular location is the cytoplasm. The protein localises to the cytoskeleton. It localises to the nucleus. It is found in the chromosome. The protein resides in the centromere. Its subcellular location is the kinetochore. Functionally, promotes ATP-dependent removal of tubulin dimers from microtubules. Regulates the turnover of microtubules at the kinetochore and functions in chromosome segregation during mitosis. May play a role in chromosome congression and may be required for the lateral to end-on conversion of the chromosome-microtubule attachment. The sequence is that of Kinesin-like protein KIF2C (kif2c) from Xenopus laevis (African clawed frog).